Consider the following 265-residue polypeptide: Ribosomal RNA small subunit methyltransferase G (265 aa).

Residues glycine 75, leucine 80, and arginine 145 each coordinate S-adenosyl-L-methionine. Residues 212 to 265 form a disordered region; that stretch reads RAVRSSQRTRAESRGGRGDGERHDGRQVRRTSRDSLRSREVGRDQPTRGQSRST. Over residues 220–257 the composition is skewed to basic and acidic residues; that stretch reads TRAESRGGRGDGERHDGRQVRRTSRDSLRSREVGRDQP.

It belongs to the methyltransferase superfamily. RNA methyltransferase RsmG family.

It localises to the cytoplasm. Functionally, specifically methylates the N7 position of guanine in position 518 of 16S rRNA. This is Ribosomal RNA small subunit methyltransferase G from Frankia casuarinae (strain DSM 45818 / CECT 9043 / HFP020203 / CcI3).